Here is a 202-residue protein sequence, read N- to C-terminus: Securin (202 aa).

A disordered region spans residues 1-92 (MATLIYVDKE…QKQPSFSAKK (92 aa)). The residue at position 2 (Ala2) is an N-acetylalanine. The D-box motif lies at 61–64 (RKAL). 2 short sequence motifs (TEK-box) span residues 71–73 (TEK) and 94–96 (TEK). The short motif at 163–173 (XPSPVKMPSPP) is the SH3-binding element. Phosphoserine; by CDK1 is present on Ser165.

Belongs to the securin family. In terms of assembly, interacts with RPS10 and DNAJA1. Interacts with the caspase-like ESPL1, and prevents its protease activity probably by covering its active site. Interacts with TP53 and blocks its activity probably by blocking its binding to DNA. Interacts with the Ku 70 kDa subunit of ds-DNA kinase. Interacts with PTTG1IP. In terms of processing, phosphorylated at Ser-165 by CDK1 during mitosis. Post-translationally, phosphorylated in vitro by ds-DNA kinase. Ubiquitinated through 'Lys-11' linkage of ubiquitin moieties by the anaphase promoting complex (APC) at the onset of anaphase, conducting to its degradation. 'Lys-11'-linked ubiquitination is mediated by the E2 ligase UBE2C/UBCH10.

It is found in the cytoplasm. It localises to the nucleus. Regulatory protein, which plays a central role in chromosome stability, in the p53/TP53 pathway, and DNA repair. Probably acts by blocking the action of key proteins. During the mitosis, it blocks Separase/ESPL1 function, preventing the proteolysis of the cohesin complex and the subsequent segregation of the chromosomes. At the onset of anaphase, it is ubiquitinated, conducting to its destruction and to the liberation of ESPL1. Its function is however not limited to a blocking activity, since it is required to activate ESPL1. Negatively regulates the transcriptional activity and related apoptosis activity of TP53. The negative regulation of TP53 may explain the strong transforming capability of the protein when it is overexpressed. May also play a role in DNA repair via its interaction with Ku, possibly by connecting DNA damage-response pathways with sister chromatid separation. The sequence is that of Securin (PTTG1) from Pan troglodytes (Chimpanzee).